Reading from the N-terminus, the 165-residue chain is Glycine cleavage system H protein, mitochondrial (165 aa).

A mitochondrion-targeting transit peptide spans 1–34; sequence MALRMWASSTANALKLSSSSRLHLSPTFSISRCF. The Lipoyl-binding domain maps to 56 to 138; that stretch reads VATIGITDHA…YEDGWMIKIK (83 aa). Residue K97 is modified to N6-lipoyllysine.

This sequence belongs to the GcvH family. As to quaternary structure, the glycine cleavage system is composed of four proteins: P, T, L and H. The cofactor is (R)-lipoate.

It localises to the mitochondrion. The glycine cleavage system catalyzes the degradation of glycine. The H protein shuttles the methylamine group of glycine from the P protein to the T protein. In Pisum sativum (Garden pea), this protein is Glycine cleavage system H protein, mitochondrial (GDCSH).